A 125-amino-acid polypeptide reads, in one-letter code: MIKEFKEFISRGNMMDLAVGVIIGAAFTAIVNSLVKDLINPLIGLFIGKIDLSNLKFTVGEATFKYGSFLNAVINFLIIALVVFFLIKLVNKMMPKKEVEEDDPTPTNEELYLRQIRDLLQEKTK.

The next 2 helical transmembrane spans lie at 15-35 (MDLA…NSLV) and 67-87 (GSFL…FFLI).

This sequence belongs to the MscL family. Homopentamer.

It localises to the cell membrane. In terms of biological role, channel that opens in response to stretch forces in the membrane lipid bilayer. May participate in the regulation of osmotic pressure changes within the cell. This chain is Large-conductance mechanosensitive channel, found in Lactobacillus gasseri (strain ATCC 33323 / DSM 20243 / BCRC 14619 / CIP 102991 / JCM 1131 / KCTC 3163 / NCIMB 11718 / NCTC 13722 / AM63).